An 821-amino-acid chain; its full sequence is Glycerol-3-phosphate acyltransferase (821 aa).

Positions 310-315 (CHRSHM) match the HXXXXD motif motif.

Belongs to the GPAT/DAPAT family.

The protein localises to the cell membrane. The catalysed reaction is sn-glycerol 3-phosphate + an acyl-CoA = a 1-acyl-sn-glycero-3-phosphate + CoA. It participates in phospholipid metabolism; CDP-diacylglycerol biosynthesis; CDP-diacylglycerol from sn-glycerol 3-phosphate: step 1/3. The polypeptide is Glycerol-3-phosphate acyltransferase (Baumannia cicadellinicola subsp. Homalodisca coagulata).